We begin with the raw amino-acid sequence, 445 residues long: Retrovirus-related Pol polyprotein from type-1 retrotransposable element R2 (445 aa).

In terms of domain architecture, Reverse transcriptase spans 1–114 (QPSVFNLVKW…LSRDDSLAKA (114 aa)). The tract at residues 115–445 (MLASAGPAAE…GATPRQLIEY (331 aa)) is nucleic acid-binding endonuclease. A compositionally biased stretch (basic residues) spans 380-389 (GPRPAHHHQP). The interval 380-445 (GPRPAHHHQP…GATPRQLIEY (66 aa)) is disordered. The span at 396 to 405 (ATANTGTLQS) shows a compositional bias: polar residues.

The enzyme catalyses DNA(n) + a 2'-deoxyribonucleoside 5'-triphosphate = DNA(n+1) + diphosphate. In Popillia japonica (Japanese beetle), this protein is Retrovirus-related Pol polyprotein from type-1 retrotransposable element R2.